A 104-amino-acid polypeptide reads, in one-letter code: Large ribosomal subunit protein uL24 (104 aa).

It belongs to the universal ribosomal protein uL24 family. As to quaternary structure, part of the 50S ribosomal subunit.

Its function is as follows. One of two assembly initiator proteins, it binds directly to the 5'-end of the 23S rRNA, where it nucleates assembly of the 50S subunit. In terms of biological role, one of the proteins that surrounds the polypeptide exit tunnel on the outside of the subunit. This is Large ribosomal subunit protein uL24 from Shigella dysenteriae serotype 1 (strain Sd197).